Here is a 193-residue protein sequence, read N- to C-terminus: Mediator of RNA polymerase II transcription subunit 11 (193 aa).

A coiled-coil region spans residues 31–68 (AREIMQDLGKEKQISKNKMDDNANSFKKLITQVENELS). The segment at 115–193 (IEPPTQEVDE…EEEEGEQMEN (79 aa)) is disordered. Residues 121 to 143 (EVDEDNEDEEDSGDADMLEETPE) show a composition bias toward acidic residues. Low complexity predominate over residues 150–175 (TTSSSATTSDGGSGGADDAASSSAPR). The segment covering 184–193 (EEEEGEQMEN) has biased composition (acidic residues).

The protein belongs to the Mediator complex subunit 11 family. As to quaternary structure, component of the Mediator complex.

It is found in the nucleus. In terms of biological role, component of the Mediator complex, a coactivator involved in the regulated transcription of nearly all RNA polymerase II-dependent genes. Mediator functions as a bridge to convey information from gene-specific regulatory proteins to the basal RNA polymerase II transcription machinery. Mediator is recruited to promoters by direct interactions with regulatory proteins and serves as a scaffold for the assembly of a functional pre-initiation complex with RNA polymerase II and the general transcription factors. This chain is Mediator of RNA polymerase II transcription subunit 11 (mdt-11), found in Caenorhabditis briggsae.